A 541-amino-acid chain; its full sequence is Chaperonin GroEL (541 aa).

Residues 29–32, 86–90, Gly413, 480–482, and Asp496 each bind ATP; these read TLGP, DGTTT, and NAA.

This sequence belongs to the chaperonin (HSP60) family. Forms a cylinder of 14 subunits composed of two heptameric rings stacked back-to-back. Interacts with the co-chaperonin GroES.

The protein resides in the cytoplasm. It carries out the reaction ATP + H2O + a folded polypeptide = ADP + phosphate + an unfolded polypeptide.. Its function is as follows. Together with its co-chaperonin GroES, plays an essential role in assisting protein folding. The GroEL-GroES system forms a nano-cage that allows encapsulation of the non-native substrate proteins and provides a physical environment optimized to promote and accelerate protein folding. The protein is Chaperonin GroEL of Gardnerella vaginalis.